The sequence spans 206 residues: Large ribosomal subunit protein mL40 (206 aa).

The transit peptide at 1–46 (MATGVMLCAARALRPRSWIPGTCQAHVRHTHQRASLLAFWDLIPMR) directs the protein to the mitochondrion. Positions 170 to 189 (PFEKEGPHYTPPISNYQAPE) are disordered.

It belongs to the mitochondrion-specific ribosomal protein mL40 family. In terms of assembly, component of the mitochondrial ribosome large subunit (39S) which comprises a 16S rRNA and about 50 distinct proteins. Ubiquitous.

The protein resides in the mitochondrion. This Mus musculus (Mouse) protein is Large ribosomal subunit protein mL40 (Mrpl40).